The following is a 245-amino-acid chain: tRNA (guanine-N(1)-)-methyltransferase (245 aa).

S-adenosyl-L-methionine-binding positions include glycine 111 and 131 to 136 (MGDYVL).

Belongs to the RNA methyltransferase TrmD family. Homodimer.

It is found in the cytoplasm. The catalysed reaction is guanosine(37) in tRNA + S-adenosyl-L-methionine = N(1)-methylguanosine(37) in tRNA + S-adenosyl-L-homocysteine + H(+). Functionally, specifically methylates guanosine-37 in various tRNAs. This Staphylococcus aureus (strain USA300) protein is tRNA (guanine-N(1)-)-methyltransferase.